The following is a 96-amino-acid chain: Putative septation protein SpoVG (96 aa).

It belongs to the SpoVG family.

In terms of biological role, essential for sporulation. Interferes with or is a negative regulator of the pathway leading to asymmetric septation. This Priestia megaterium (Bacillus megaterium) protein is Putative septation protein SpoVG.